A 358-amino-acid polypeptide reads, in one-letter code: Peptide chain release factor 1 (358 aa).

The residue at position 233 (Q233) is an N5-methylglutamine. The interval 286-309 (AELASARKSQVGTGDRSERIRTYN) is disordered.

The protein belongs to the prokaryotic/mitochondrial release factor family. Post-translationally, methylated by PrmC. Methylation increases the termination efficiency of RF1.

It is found in the cytoplasm. In terms of biological role, peptide chain release factor 1 directs the termination of translation in response to the peptide chain termination codons UAG and UAA. The polypeptide is Peptide chain release factor 1 (Carboxydothermus hydrogenoformans (strain ATCC BAA-161 / DSM 6008 / Z-2901)).